Reading from the N-terminus, the 617-residue chain is Dihydroxy-acid dehydratase (617 aa).

Asp-81 serves as a coordination point for Mg(2+). Residue Cys-122 participates in [2Fe-2S] cluster binding. Mg(2+)-binding residues include Asp-123 and Lys-124. An N6-carboxylysine modification is found at Lys-124. [2Fe-2S] cluster is bound at residue Cys-195. Glu-491 is a binding site for Mg(2+). Residue Ser-517 is the Proton acceptor of the active site.

The protein belongs to the IlvD/Edd family. Homodimer. [2Fe-2S] cluster is required as a cofactor. The cofactor is Mg(2+).

It carries out the reaction (2R)-2,3-dihydroxy-3-methylbutanoate = 3-methyl-2-oxobutanoate + H2O. The catalysed reaction is (2R,3R)-2,3-dihydroxy-3-methylpentanoate = (S)-3-methyl-2-oxopentanoate + H2O. It functions in the pathway amino-acid biosynthesis; L-isoleucine biosynthesis; L-isoleucine from 2-oxobutanoate: step 3/4. The protein operates within amino-acid biosynthesis; L-valine biosynthesis; L-valine from pyruvate: step 3/4. Functions in the biosynthesis of branched-chain amino acids. Catalyzes the dehydration of (2R,3R)-2,3-dihydroxy-3-methylpentanoate (2,3-dihydroxy-3-methylvalerate) into 2-oxo-3-methylpentanoate (2-oxo-3-methylvalerate) and of (2R)-2,3-dihydroxy-3-methylbutanoate (2,3-dihydroxyisovalerate) into 2-oxo-3-methylbutanoate (2-oxoisovalerate), the penultimate precursor to L-isoleucine and L-valine, respectively. The chain is Dihydroxy-acid dehydratase from Buchnera aphidicola subsp. Diuraphis noxia.